Here is a 201-residue protein sequence, read N- to C-terminus: 7-methyl-GTP pyrophosphatase (201 aa).

The active-site Proton acceptor is the D73.

This sequence belongs to the Maf family. YceF subfamily. Requires a divalent metal cation as cofactor.

It is found in the cytoplasm. It catalyses the reaction N(7)-methyl-GTP + H2O = N(7)-methyl-GMP + diphosphate + H(+). Nucleoside triphosphate pyrophosphatase that hydrolyzes 7-methyl-GTP (m(7)GTP). May have a dual role in cell division arrest and in preventing the incorporation of modified nucleotides into cellular nucleic acids. The polypeptide is 7-methyl-GTP pyrophosphatase (Thiobacillus denitrificans (strain ATCC 25259 / T1)).